Here is a 308-residue protein sequence, read N- to C-terminus: Putative protein TIC 214 N-terminal part (308 aa).

Helical transmembrane passes span 18–38 (IINS…FSIG), 64–84 (FITG…HLAL), 87–107 (PHTI…WNNH), 124–144 (LSIQ…HFIL), 172–192 (VGWL…LSWI), and 215–235 (IFSI…PSPI). Basic and acidic residues predominate over residues 239-249 (KLKETSEMEER). Positions 239–308 (KLKETSEMEE…RDPSEWKGNI (70 aa)) are disordered. A compositionally biased stretch (acidic residues) spans 250 to 262 (GESEEETDVEIET). Over residues 264–273 (SETKETKQEQ) the composition is skewed to basic and acidic residues. Over residues 275-293 (GSTEEDPSLCSEEQEDPDK) the composition is skewed to acidic residues. Residues 294-308 (LDETGRDPSEWKGNI) are compositionally biased toward basic and acidic residues.

The protein belongs to the TIC214 family. Part of the Tic complex.

It localises to the plastid. Its subcellular location is the chloroplast inner membrane. Functionally, involved in protein precursor import into chloroplasts. May be part of an intermediate translocation complex acting as a protein-conducting channel at the inner envelope. In Piper cenocladum (Ant piper), this protein is Putative protein TIC 214 N-terminal part.